The sequence spans 510 residues: Histidine ammonia-lyase (510 aa).

The 5-imidazolinone (Ala-Gly) cross-link spans 143–145; that stretch reads ASG. Serine 144 carries the 2,3-didehydroalanine (Ser) modification.

The protein belongs to the PAL/histidase family. Post-translationally, contains an active site 4-methylidene-imidazol-5-one (MIO), which is formed autocatalytically by cyclization and dehydration of residues Ala-Ser-Gly.

The protein localises to the cytoplasm. It carries out the reaction L-histidine = trans-urocanate + NH4(+). It participates in amino-acid degradation; L-histidine degradation into L-glutamate; N-formimidoyl-L-glutamate from L-histidine: step 1/3. This Psychromonas ingrahamii (strain DSM 17664 / CCUG 51855 / 37) protein is Histidine ammonia-lyase.